The primary structure comprises 504 residues: Glucosaminyl-phosphatidylinositol-acyltransferase PIGW (504 aa).

The Lumenal portion of the chain corresponds to 1–21 (MSEKQMKEAFVSNLNGTTVLE). N-linked (GlcNAc...) asparagine glycosylation occurs at asparagine 15. A helical membrane pass occupies residues 22 to 42 (ITQGLCFPAFCILCRGFLIIF). The Cytoplasmic portion of the chain corresponds to 43–56 (SQYLCSFSPTWKTR). A helical membrane pass occupies residues 57 to 75 (FLTDFVVLIVPMVATLTIW). Over 76–81 (ASFILL) the chain is Lumenal. The helical transmembrane segment at 82-98 (ELLGVIIFGAGLLYQIY) threads the bilayer. The Cytoplasmic segment spans residues 99–131 (RRRTCYARLPFLKILEKFLNISLESEYNPAISC). The helical transmembrane segment at 132-152 (FRVITSAFTAIAILAVDFPLF) threads the bilayer. The Lumenal portion of the chain corresponds to 153-162 (PRRFAKTELY). A helical membrane pass occupies residues 163 to 183 (GTGAMDFGVGGFVFGSAMVCL). The Cytoplasmic segment spans residues 184-202 (EVRRRKYMEGSKLHYFTNS). Residues 203–223 (LYSVWPLVFLGIGRLAIIKSI) traverse the membrane as a helical segment. The Lumenal portion of the chain corresponds to 224–237 (GYQEHLTEYGVHWN). A helical membrane pass occupies residues 238–258 (FFFTIIVVKLITPLLLIIFPL). Residues 259 to 260 (NK) lie on the Cytoplasmic side of the membrane. The helical transmembrane segment at 261-281 (SWIIALGITVLYQLALDFTSL) threads the bilayer. Residues 282–305 (KRLILYGTDGSGTRVGLLNANREG) lie on the Lumenal side of the membrane. The chain crosses the membrane as a helical span at residues 306–326 (IISTLGYVAIHMAGVQTGLYM). Residues 327-338 (HKNRSHIKDLIK) are Cytoplasmic-facing. A helical transmembrane segment spans residues 339-359 (VACFLLLAAISLFISLYVVQV). The Lumenal portion of the chain corresponds to 360-370 (NVEAVSRRMAN). The chain crosses the membrane as a helical span at residues 371-391 (LAFCIWIVASSLILLSSLLLG). At 392 to 448 (DIILSFAKFLIKGALVPCSWKLIQSPVTNKKHSESLVPEAERMEPSLCLITALNRKQ) the chain is on the cytoplasmic side. The residue at position 416 (serine 416) is a Phosphoserine. The chain crosses the membrane as a helical span at residues 449–469 (LIFFLLSNITTGLINLMVDTL). Residues 470–473 (HSST) lie on the Lumenal side of the membrane. A helical transmembrane segment spans residues 474–494 (LWALFVVNLYMFSNCLIVYVL). The Cytoplasmic portion of the chain corresponds to 495 to 504 (YLQDKTVQFW).

The protein belongs to the PIGW family.

It localises to the endoplasmic reticulum membrane. The protein operates within glycolipid biosynthesis; glycosylphosphatidylinositol-anchor biosynthesis. In terms of biological role, acyltransferase that catalyzes the acyl transfer from an acyl-CoA at the 2-OH position of the inositol ring of glucosaminyl phosphatidylinositol (GlcN-PI) to generate glucosaminyl acyl phosphatidylinositol (GlcN-(acyl)PI) and participates in the fourth step of GPI-anchor biosynthesis. Required for the transport of GPI-anchored proteins to the plasma membrane. Acetylation during GPI-anchor biosynthesis is not essential for the subsequent mannosylation and is usually removed soon after the attachment of GPIs to proteins. This chain is Glucosaminyl-phosphatidylinositol-acyltransferase PIGW, found in Homo sapiens (Human).